The sequence spans 120 residues: Ribosome-binding factor A (120 aa).

Belongs to the RbfA family. Monomer. Binds 30S ribosomal subunits, but not 50S ribosomal subunits or 70S ribosomes.

It is found in the cytoplasm. In terms of biological role, one of several proteins that assist in the late maturation steps of the functional core of the 30S ribosomal subunit. Associates with free 30S ribosomal subunits (but not with 30S subunits that are part of 70S ribosomes or polysomes). Required for efficient processing of 16S rRNA. May interact with the 5'-terminal helix region of 16S rRNA. The chain is Ribosome-binding factor A from Rickettsia rickettsii (strain Iowa).